A 288-amino-acid polypeptide reads, in one-letter code: Oxaloacetate decarboxylase (288 aa).

S47 is a substrate binding site. A Mg(2+)-binding site is contributed by D85. Substrate is bound by residues R156 and H232.

Belongs to the isocitrate lyase/PEP mutase superfamily. Oxaloacetate decarboxylase family. As to quaternary structure, homotetramer; dimer of dimers. Mg(2+) serves as cofactor.

It catalyses the reaction oxaloacetate + H(+) = pyruvate + CO2. In terms of biological role, catalyzes the decarboxylation of oxaloacetate into pyruvate. Seems to play a role in maintaining cellular concentrations of bicarbonate and pyruvate. This chain is Oxaloacetate decarboxylase, found in Rhodopseudomonas palustris (strain TIE-1).